A 96-amino-acid polypeptide reads, in one-letter code: Small ribosomal subunit protein uS17 (96 aa).

Belongs to the universal ribosomal protein uS17 family. In terms of assembly, part of the 30S ribosomal subunit.

Its function is as follows. One of the primary rRNA binding proteins, it binds specifically to the 5'-end of 16S ribosomal RNA. This Deinococcus radiodurans (strain ATCC 13939 / DSM 20539 / JCM 16871 / CCUG 27074 / LMG 4051 / NBRC 15346 / NCIMB 9279 / VKM B-1422 / R1) protein is Small ribosomal subunit protein uS17.